The chain runs to 360 residues: Mannose-1-phosphate guanylyltransferase catalytic subunit beta (360 aa).

Positions 2-222 (KALILVGGYG…QGFWMDIGQP (221 aa)) are substrate-binding domain. Asp110 contacts GDP-alpha-D-mannose. Asp110 contacts Mg(2+). Lys162 is an active-site residue. Asp218 contacts GDP-alpha-D-mannose. Asp218 provides a ligand contact to Mg(2+). The hexapeptide repeat domain stretch occupies residues 245-360 (CSGPGIVGNV…ESVPEPGIIM (116 aa)).

Belongs to the transferase hexapeptide repeat family. Component of the GMPPA-GMPPB mannose-1-phosphate guanylyltransferase complex composed of 4 GMPPA subunits and 8 GMPPB subunits; the complex is organized into three layers, a central layer made up of 2 GMPPA dimers sandwiched between two layers each made up of 2 GMPPB dimers. GMPPB catalytic activity is reduced when part of the complex and binding of GDP-alpha-D-Mannose by GMPPA induces allosteric feedback inhibition of GMPPB. The cofactor is Mg(2+). In terms of tissue distribution, expressed in the liver (at protein level).

It localises to the cytoplasm. It carries out the reaction alpha-D-mannose 1-phosphate + GTP + H(+) = GDP-alpha-D-mannose + diphosphate. It functions in the pathway nucleotide-sugar biosynthesis; GDP-alpha-D-mannose biosynthesis; GDP-alpha-D-mannose from alpha-D-mannose 1-phosphate (GTP route): step 1/1. With respect to regulation, enzyme activity is reduced by incorporation into the GMPPA-GMPPB mannose-1-phosphate guanylyltransferase complex. Allosterically inhibited, when part of the GMPPA-GMPPB complex, by GDP-alpha-D-mannose binding to GMPPA. In terms of biological role, catalytic subunit of the GMPPA-GMPPB mannose-1-phosphate guanylyltransferase complex. Catalyzes the formation of GDP-mannose, an essential precursor of glycan moieties of glycoproteins and glycolipids. Can catalyze the reverse reaction in vitro. Together with GMPPA regulates GDP-alpha-D-mannose levels. The chain is Mannose-1-phosphate guanylyltransferase catalytic subunit beta from Sus scrofa (Pig).